Reading from the N-terminus, the 102-residue chain is Small ribosomal subunit protein uS10 (102 aa).

The protein belongs to the universal ribosomal protein uS10 family. Part of the 30S ribosomal subunit.

Functionally, involved in the binding of tRNA to the ribosomes. The chain is Small ribosomal subunit protein uS10 from Methanococcus maripaludis (strain C7 / ATCC BAA-1331).